We begin with the raw amino-acid sequence, 603 residues long: MSSEHIQNKLALLPDQPGCYLMKDRQGTIIYVGKAKILKNRVRSYFSGTHDSKTQRLVQEIVDFEYIVTSSNVEALLLEINLIKKHDPRFNIRLKDDKTYPFIKITNERHPRLIITRQVKKDKGKYFGPYPNVYAANEVKRILDRLYPLRKCSTLPNKVCLYYHLGQCLAPCVFDVEASKYKEMQDEIVAFLNGGYKTVKNDLMKKMQEAAENMEFEKAGEFRDQINAIETTMEKQKMTMNDFVDRDVFGYAIDKGWMCVQVFFIRQGKLIERDVSQFPFYNDADEDFLTFIGQFYQKANHIPPKEIYLPDDVDSEAVQAVVPDTKIIVPQRGNKKDLVKLAYKNAKISLNEKFMLLERNEERTVGAVERLGEAMGIPTPSRVEAFDNSNIHGTDPVSAMVTFLDGKPSKNDYRKYKIKTVEGPDDYATMREVIRRRYWRVLKEGLPMPDLILIDGGKGQIDSAKDVLTNELGLDIPVAGLAKDDKHRTSQLLFGDPLEIVPLERNSQEFYLLQRMQDEVHRFAITFHRQLRSKTGFQSILDGIPGVGPGRKKKLLKHFGSMKKLKEASVEEIKEAGVPLNVAEEVHKHITAFNEKAKNTEQK.

The 78-residue stretch at 15 to 92 folds into the GIY-YIG domain; it reads DQPGCYLMKD…IKKHDPRFNI (78 aa). In terms of domain architecture, UVR spans 197–232; it reads KTVKNDLMKKMQEAAENMEFEKAGEFRDQINAIETT.

Belongs to the UvrC family. Interacts with UvrB in an incision complex.

The protein resides in the cytoplasm. In terms of biological role, the UvrABC repair system catalyzes the recognition and processing of DNA lesions. UvrC both incises the 5' and 3' sides of the lesion. The N-terminal half is responsible for the 3' incision and the C-terminal half is responsible for the 5' incision. This chain is UvrABC system protein C, found in Listeria monocytogenes serotype 4a (strain HCC23).